The following is a 56-amino-acid chain: Large ribosomal subunit protein bL33 (56 aa).

The protein belongs to the bacterial ribosomal protein bL33 family.

The sequence is that of Large ribosomal subunit protein bL33 from Ehrlichia canis (strain Jake).